The chain runs to 488 residues: Glycogen synthase (488 aa).

Lys17 is an ADP-alpha-D-glucose binding site.

This sequence belongs to the glycosyltransferase 1 family. Bacterial/plant glycogen synthase subfamily.

The catalysed reaction is [(1-&gt;4)-alpha-D-glucosyl](n) + ADP-alpha-D-glucose = [(1-&gt;4)-alpha-D-glucosyl](n+1) + ADP + H(+). Its pathway is glycan biosynthesis; glycogen biosynthesis. In terms of biological role, synthesizes alpha-1,4-glucan chains using ADP-glucose. This Nitratidesulfovibrio vulgaris (strain DSM 19637 / Miyazaki F) (Desulfovibrio vulgaris) protein is Glycogen synthase.